Reading from the N-terminus, the 426-residue chain is MNFDVVIIGGGLAGLTCGIALQKQGKQCAIINNGQAAIDFSSGSMDLLSCLPSGQKVHVFCEAFSELSQQAPEHPYCLLGQHQVVAKVQQFEQFMQELGLVGSHKQNHLRVTPLGGLRHTWLSPKSVPVIAENEHFPYRQIAILGIEGYHDFQPQILVDNLKQNAAFSHCDFSIGYLNIPELDYLRQNAREFRSVNIAQLLEHKLAFEDLVQEIKQAAGNAQAVFLLACFGLDDQRFFDSLKQATALALFELPTLPPSLIGIRQYRTLRDQFEKLGGLLLNGDRAVRAEFDGDRVARIFTTLHQEESINAAHFVLASGSFFSNGLVAEFERVKEPIFDLDIIGNKAFINSERVSWTDKRFAAAQPYQSAGVAINHHCQVYKNGHLIPNLYAIGNVIGGFWGIEQGCASGVSVVTALTVAEWVGGTK.

It belongs to the anaerobic G-3-P dehydrogenase subunit B family. As to quaternary structure, composed of a catalytic GlpA/B dimer and of membrane bound GlpC. FMN is required as a cofactor.

It carries out the reaction a quinone + sn-glycerol 3-phosphate = dihydroxyacetone phosphate + a quinol. It participates in polyol metabolism; glycerol degradation via glycerol kinase pathway; glycerone phosphate from sn-glycerol 3-phosphate (anaerobic route): step 1/1. In terms of biological role, conversion of glycerol 3-phosphate to dihydroxyacetone. Uses fumarate or nitrate as electron acceptor. The polypeptide is Anaerobic glycerol-3-phosphate dehydrogenase subunit B (Haemophilus ducreyi (strain 35000HP / ATCC 700724)).